Here is a 258-residue protein sequence, read N- to C-terminus: Octanoyltransferase (258 aa).

The BPL/LPL catalytic domain maps to 42-226 (NVGTDTLLLL…AVVAALDGEL (185 aa)). Residues 80 to 87 (RGGKITWH), 156 to 158 (AIG), and 169 to 171 (GFS) contribute to the substrate site. Cysteine 187 (acyl-thioester intermediate) is an active-site residue.

The protein belongs to the LipB family.

The protein resides in the cytoplasm. The catalysed reaction is octanoyl-[ACP] + L-lysyl-[protein] = N(6)-octanoyl-L-lysyl-[protein] + holo-[ACP] + H(+). The protein operates within protein modification; protein lipoylation via endogenous pathway; protein N(6)-(lipoyl)lysine from octanoyl-[acyl-carrier-protein]: step 1/2. In terms of biological role, catalyzes the transfer of endogenously produced octanoic acid from octanoyl-acyl-carrier-protein onto the lipoyl domains of lipoate-dependent enzymes. Lipoyl-ACP can also act as a substrate although octanoyl-ACP is likely to be the physiological substrate. The protein is Octanoyltransferase of Rhodococcus jostii (strain RHA1).